The primary structure comprises 508 residues: MLO-like protein 3 (508 aa).

Topologically, residues 1–21 (MTDKEESNHSSEVGAVRSLQE) are extracellular. A helical transmembrane segment spans residues 22–42 (TPTWALATVCFFFIAVSICLE). Residues 43–68 (RLINLLSTRLKKNRKTSLLEAVEKLK) are Cytoplasmic-facing. The helical transmembrane segment at 69–89 (SVLMVLGFMSLMLNVTEGEVS) threads the bilayer. At 90–153 (KICIPIKYAN…SEEGLTQLSY (64 aa)) the chain is on the extracellular side. The helical transmembrane segment at 154–174 (FFFVLACMHILCNLAILLLGM) threads the bilayer. Topologically, residues 175 to 275 (AKMRKWNSWE…IQRSLHEDFK (101 aa)) are cytoplasmic. Residues 276-296 (TVVGISPLMWLTVVIFMLLDV) traverse the membrane as a helical segment. Residues 297–304 (SGWRVYFY) are Extracellular-facing. The chain crosses the membrane as a helical span at residues 305 to 325 (MSFVPLIIVLVIGTKLEMIVA). The Cytoplasmic segment spans residues 326-357 (KMAVTIKENNSVIRGTPLVESNDTHFWFSNPR). Residues 358-378 (FLLSILHYTLFLNTFEMAFIV) traverse the membrane as a helical segment. Residues 379–401 (WITWQFGINSCYHDNQGIIITRL) are Extracellular-facing. Residues 402 to 422 (VLAVTVQFLSSYITLPLYAIV) form a helical membrane-spanning segment. Topologically, residues 423–508 (TQMGSSYKRA…EIQIQEKTER (86 aa)) are cytoplasmic. Residues 436–457 (EQLANVLRHWQGMVRDKKKTIQ) form a calmodulin-binding region. The tract at residues 453-492 (KKTIQTPDTDNNSNNNNGDIDSGESPVQTEVASEFRFSGR) is disordered. Ser-494 carries the post-translational modification Phosphoserine.

This sequence belongs to the MLO family.

The protein localises to the membrane. Its function is as follows. May be involved in modulation of pathogen defense and leaf cell death. Activity seems to be regulated by Ca(2+)-dependent calmodulin binding and seems not to require heterotrimeric G proteins. This is MLO-like protein 3 (MLO3) from Arabidopsis thaliana (Mouse-ear cress).